The following is a 327-amino-acid chain: Zinc transport protein ZntB (327 aa).

Over 1-273 (MEAIKGSEVN…SRRSYTMSLM (273 aa)) the chain is Cytoplasmic. The chain crosses the membrane as a helical span at residues 274 to 294 (AMVFLPSTFLTGLFGVNLGGI). The Periplasmic segment spans residues 295–300 (PGGGWH). Residues 301–321 (LGFSVFCVALVLLIGGVTWWL) traverse the membrane as a helical segment. Residues 322–327 (HRSKWL) lie on the Cytoplasmic side of the membrane.

This sequence belongs to the CorA metal ion transporter (MIT) (TC 1.A.35) family.

The protein resides in the cell inner membrane. The enzyme catalyses Zn(2+)(out) + H(+)(out) = Zn(2+)(in) + H(+)(in). In terms of biological role, zinc transporter. Acts as a Zn(2+):proton symporter, which likely mediates zinc ion uptake. The polypeptide is Zinc transport protein ZntB (Cronobacter sakazakii (strain ATCC BAA-894) (Enterobacter sakazakii)).